Reading from the N-terminus, the 423-residue chain is Lipoamide acyltransferase component of branched-chain alpha-keto acid dehydrogenase complex (423 aa).

A Lipoyl-binding domain is found at 3–78 (THVIKMPDIG…AVGSELIRIE (76 aa)). The residue at position 44 (Lys44) is an N6-lipoyllysine. In terms of domain architecture, Peripheral subunit-binding (PSBD) spans 137 to 174 (LASPAVRKRALDAGIELRYVHGSGPAGRILHEDLDAFM). Residues His395 and Asp399 contribute to the active site.

It belongs to the 2-oxoacid dehydrogenase family. As to quaternary structure, forms a 24-polypeptide structural core with octahedral symmetry. The cofactor is (R)-lipoate.

It catalyses the reaction N(6)-[(R)-dihydrolipoyl]-L-lysyl-[protein] + 2-methylpropanoyl-CoA = N(6)-[(R)-S(8)-2-methylpropanoyldihydrolipoyl]-L-lysyl-[protein] + CoA. Its function is as follows. The branched-chain alpha-keto dehydrogenase complex catalyzes the overall conversion of alpha-keto acids to acyl-CoA and CO(2). It contains multiple copies of three enzymatic components: branched-chain alpha-keto acid decarboxylase (E1), lipoamide acyltransferase (E2) and lipoamide dehydrogenase (E3). The sequence is that of Lipoamide acyltransferase component of branched-chain alpha-keto acid dehydrogenase complex (bkdB) from Pseudomonas putida (Arthrobacter siderocapsulatus).